Here is a 242-residue protein sequence, read N- to C-terminus: MRFDVVTLFPAIFDGYLTQSLLDKAIVRGLVEIQRHNLRDWAEDTPHRKVDDRPFGGGPGMLLQVEPTVTCVRDVDAMADVPARKILLTPQGRRLDQRLAEDLATSDRIMLMCGRYEGFDQRVLDILQPEEISIGDFVLNGGEVAAMTIIDAVVRLLPGVLGDEQSSLDDSFSRGNRMLEFPQYTRPREFEGHTVPDVLLSGDHAAIAAWRAEQSRARTIDRRRDLLPEHSKNNPEQTNKLS.

Residues G114 and 134–139 contribute to the S-adenosyl-L-methionine site; that span reads IGDFVL. A compositionally biased stretch (basic and acidic residues) spans 223–233; it reads RRDLLPEHSKN. Positions 223-242 are disordered; that stretch reads RRDLLPEHSKNNPEQTNKLS.

This sequence belongs to the RNA methyltransferase TrmD family. Homodimer.

The protein resides in the cytoplasm. It catalyses the reaction guanosine(37) in tRNA + S-adenosyl-L-methionine = N(1)-methylguanosine(37) in tRNA + S-adenosyl-L-homocysteine + H(+). Functionally, specifically methylates guanosine-37 in various tRNAs. This Rhodopirellula baltica (strain DSM 10527 / NCIMB 13988 / SH1) protein is tRNA (guanine-N(1)-)-methyltransferase.